The sequence spans 132 residues: Small ribosomal subunit protein uS11 (132 aa).

A disordered region spans residues 1–21; the sequence is MAAPKSAVRKPRRKDKKNIAV. Positions 7-16 are enriched in basic residues; that stretch reads AVRKPRRKDK.

The protein belongs to the universal ribosomal protein uS11 family. In terms of assembly, part of the 30S ribosomal subunit. Interacts with proteins S7 and S18. Binds to IF-3.

In terms of biological role, located on the platform of the 30S subunit, it bridges several disparate RNA helices of the 16S rRNA. Forms part of the Shine-Dalgarno cleft in the 70S ribosome. This is Small ribosomal subunit protein uS11 from Clavibacter sepedonicus (Clavibacter michiganensis subsp. sepedonicus).